Consider the following 284-residue polypeptide: Cystinosin homolog (284 aa).

7 helical membrane passes run 3–23 (ALSI…SLSF), 37–57 (IGLS…YSVF), 86–106 (IAFA…CFIY), 116–136 (LGIG…ILGF), 139–159 (VFTW…ITFI), 181–201 (NVLL…LDVA), and 216–236 (LGLS…HYIL). The PQ-loop 1 domain occupies 4 to 70 (LSIISIIIGW…LYFDKLVKNE (67 aa)). The 55-residue stretch at 154 to 208 (LFITFIKYIPQAYLNFKNKSTSGWSVHNVLLDFSGGVLSLLQMFLDVADSGNWNI) folds into the PQ-loop 2 domain. The disordered stretch occupies residues 247–269 (NLNDNNIPNNNNNNNNNINNNTP).

This sequence belongs to the cystinosin family.

The protein resides in the lysosome membrane. It catalyses the reaction L-cystine(out) + H(+)(out) = L-cystine(in) + H(+)(in). Functionally, cystine/H(+) symporter that mediates export of cystine, the oxidized dimer of cysteine, from lysosomes. The polypeptide is Cystinosin homolog (ctns) (Dictyostelium discoideum (Social amoeba)).